The sequence spans 352 residues: Uroporphyrinogen decarboxylase (352 aa).

Substrate contacts are provided by residues 26-30, aspartate 76, tyrosine 153, serine 208, and histidine 323; that span reads RQAGR.

Belongs to the uroporphyrinogen decarboxylase family. Homodimer.

It localises to the cytoplasm. The enzyme catalyses uroporphyrinogen III + 4 H(+) = coproporphyrinogen III + 4 CO2. It functions in the pathway porphyrin-containing compound metabolism; protoporphyrin-IX biosynthesis; coproporphyrinogen-III from 5-aminolevulinate: step 4/4. In terms of biological role, catalyzes the decarboxylation of four acetate groups of uroporphyrinogen-III to yield coproporphyrinogen-III. This is Uroporphyrinogen decarboxylase from Prochlorococcus marinus (strain NATL1A).